The sequence spans 310 residues: MGSTAPLRLPVIDLSMKNLKPGTTSWNSVRTQVREALEEYGCFEAVIDAVSPELQKAVCNKGHELLNLPLETKMLNGNKPEYDGFTSIPNLNEGMGVGRITDLEKVERFTNLMWPEGNKDFCETVYSYGKRMAEVDHILKMMVFESFGMEKHFDSFCESTNYLLHFMRYQQPGKDGRSPALSLHKDKSILTIVNQNDVKGLEFETKDGEWILPTADNHIVLLGDCFMAWSNGRLHSPLHRVTLVANQARLSTSSFSFPKDIIETPAELVDEEHPLLFNPFEITELLAYCFTKEGAKAVCDLKQYKAYTGA.

In terms of domain architecture, Fe2OG dioxygenase spans 159–258 (STNYLLHFMR…RLSTSSFSFP (100 aa)). Positions 184, 186, and 239 each coordinate Fe cation. Residue Arg-249 coordinates 2-oxoglutarate.

The protein belongs to the iron/ascorbate-dependent oxidoreductase family. Requires Fe(2+) as cofactor. As to expression, mostly expressed in leaves and stems.

It catalyses the reaction (-)-yatein + 2-oxoglutarate + O2 = (-)-deoxypodophyllotoxin + succinate + CO2 + H2O. It participates in aromatic compound metabolism; phenylpropanoid biosynthesis. 2-oxoglutarate-dependent dioxygenase involved in the biosynthesis of etoposide, a chemotherapeutic compound of the topoisomerase inhibitor family. Catalyzes the conversion of yatein to deoxypodophyllotoxin. Can also use, to some extent, demethylyatein as substrate. The protein is Deoxypodophyllotoxin synthase of Sinopodophyllum hexandrum (Himalayan may apple).